Consider the following 968-residue polypeptide: Glycine dehydrogenase (decarboxylating) (968 aa).

Residue lysine 713 is modified to N6-(pyridoxal phosphate)lysine.

The protein belongs to the GcvP family. In terms of assembly, the glycine cleavage system is composed of four proteins: P, T, L and H. Pyridoxal 5'-phosphate serves as cofactor.

It catalyses the reaction N(6)-[(R)-lipoyl]-L-lysyl-[glycine-cleavage complex H protein] + glycine + H(+) = N(6)-[(R)-S(8)-aminomethyldihydrolipoyl]-L-lysyl-[glycine-cleavage complex H protein] + CO2. In terms of biological role, the glycine cleavage system catalyzes the degradation of glycine. The P protein binds the alpha-amino group of glycine through its pyridoxal phosphate cofactor; CO(2) is released and the remaining methylamine moiety is then transferred to the lipoamide cofactor of the H protein. The chain is Glycine dehydrogenase (decarboxylating) from Variovorax paradoxus (strain S110).